The following is a 53-amino-acid chain: Metallothionein (53 aa).

Positions 1–6 (MRVIRM) are excised as a propeptide. Cu(+)-binding residues include C17, H19, C22, C24, C32, H33, C34, C43, and C45.

The protein belongs to the metallothionein superfamily.

Functionally, metallothioneins are small proteins that have a high content of cysteine residues which allow them to bind heavy metal ions through clusters of thiolate bonds. MymT binds up to seven ions of Cu(+), with a preference for four to six Cu(+) ions, in a solvent-shielded core. MymT protects M.tuberculosis from copper toxicity. The chain is Metallothionein (mymT) from Mycobacterium tuberculosis (strain CDC 1551 / Oshkosh).